Reading from the N-terminus, the 177-residue chain is Nucleoside triphosphate/diphosphate phosphatase (177 aa).

Catalysis depends on arginine 23, which acts as the Proton donor. Mg(2+) is bound by residues asparagine 87, aspartate 103, aspartate 105, aspartate 107, aspartate 120, and glutamate 123.

It belongs to the Ntdp family. It depends on Mg(2+) as a cofactor.

The enzyme catalyses a ribonucleoside 5'-triphosphate + H2O = a ribonucleoside 5'-diphosphate + phosphate + H(+). The catalysed reaction is a ribonucleoside 5'-diphosphate + H2O = a ribonucleoside 5'-phosphate + phosphate + H(+). Functionally, has nucleoside phosphatase activity towards nucleoside triphosphates and nucleoside diphosphates. The sequence is that of Nucleoside triphosphate/diphosphate phosphatase from Streptococcus pneumoniae (strain ATCC 700669 / Spain 23F-1).